A 477-amino-acid chain; its full sequence is Transmembrane and coiled-coil domain protein 3 (477 aa).

The disordered stretch occupies residues 1–24 (MPGSDTALTVDRTYSDPGRHHRCK). A Phosphoserine modification is found at serine 46. 2 coiled-coil regions span residues 63–83 (KVKLNADSLRQKILKVTEQIK) and 112–149 (KQVFEKKNQKSAHSIAQLQKKLEQYHRKLREIEQNGVT). The tract at residues 234–280 (ASPRAYGGSATIVNKPKYGSDDECSSGTSGSADSNGNQSFGAGGTST) is disordered. A Phosphoserine modification is found at serine 253. A compositionally biased stretch (polar residues) spans 258–280 (SSGTSGSADSNGNQSFGAGGTST). Residues 284-398 (QGKIAKIMEE…KLELHQQEQQ (115 aa)) are a coiled coil. The next 2 membrane-spanning stretches (helical) occupy residues 409–429 (VLLGKCINVVLAFMTVILVCV) and 450–470 (FFAVTLLAIFCKNWDHILCAI).

It belongs to the TEX28 family. In terms of assembly, may form homodimers and heterodimers with TMCC2 or TMCC3 via the coiled-coil domains. Interacts with ribosomal proteins RPL4 and RPS6.

Its subcellular location is the endoplasmic reticulum membrane. In Mus musculus (Mouse), this protein is Transmembrane and coiled-coil domain protein 3.